Consider the following 178-residue polypeptide: ATP synthase subunit delta (178 aa).

It belongs to the ATPase delta chain family. As to quaternary structure, F-type ATPases have 2 components, F(1) - the catalytic core - and F(0) - the membrane proton channel. F(1) has five subunits: alpha(3), beta(3), gamma(1), delta(1), epsilon(1). F(0) has three main subunits: a(1), b(2) and c(10-14). The alpha and beta chains form an alternating ring which encloses part of the gamma chain. F(1) is attached to F(0) by a central stalk formed by the gamma and epsilon chains, while a peripheral stalk is formed by the delta and b chains.

It is found in the cell inner membrane. F(1)F(0) ATP synthase produces ATP from ADP in the presence of a proton or sodium gradient. F-type ATPases consist of two structural domains, F(1) containing the extramembraneous catalytic core and F(0) containing the membrane proton channel, linked together by a central stalk and a peripheral stalk. During catalysis, ATP synthesis in the catalytic domain of F(1) is coupled via a rotary mechanism of the central stalk subunits to proton translocation. Its function is as follows. This protein is part of the stalk that links CF(0) to CF(1). It either transmits conformational changes from CF(0) to CF(1) or is implicated in proton conduction. This chain is ATP synthase subunit delta, found in Chromobacterium violaceum (strain ATCC 12472 / DSM 30191 / JCM 1249 / CCUG 213 / NBRC 12614 / NCIMB 9131 / NCTC 9757 / MK).